A 181-amino-acid polypeptide reads, in one-letter code: Large ribosomal subunit protein uL5 (181 aa).

The protein belongs to the universal ribosomal protein uL5 family. As to quaternary structure, part of the 50S ribosomal subunit; part of the 5S rRNA/L5/L18/L25 subcomplex. Contacts the 5S rRNA and the P site tRNA. Forms a bridge to the 30S subunit in the 70S ribosome.

Its function is as follows. This is one of the proteins that bind and probably mediate the attachment of the 5S RNA into the large ribosomal subunit, where it forms part of the central protuberance. In the 70S ribosome it contacts protein S13 of the 30S subunit (bridge B1b), connecting the 2 subunits; this bridge is implicated in subunit movement. Contacts the P site tRNA; the 5S rRNA and some of its associated proteins might help stabilize positioning of ribosome-bound tRNAs. This is Large ribosomal subunit protein uL5 from Desulforamulus reducens (strain ATCC BAA-1160 / DSM 100696 / MI-1) (Desulfotomaculum reducens).